A 216-amino-acid chain; its full sequence is Thymidine kinase (216 aa).

Residues 9–16 (GPMDSGKS) and 86–89 (DEAQ) each bind ATP. The active-site Proton acceptor is glutamate 87.

The protein belongs to the thymidine kinase family. As to quaternary structure, homotetramer.

The protein resides in the cytoplasm. It carries out the reaction thymidine + ATP = dTMP + ADP + H(+). In Cutibacterium acnes (strain DSM 16379 / KPA171202) (Propionibacterium acnes), this protein is Thymidine kinase.